The chain runs to 83 residues: Translational regulator CsrA (83 aa).

It belongs to the CsrA/RsmA family. In terms of assembly, homodimer; the beta-strands of each monomer intercalate to form a hydrophobic core, while the alpha-helices form wings that extend away from the core.

The protein resides in the cytoplasm. Functionally, a translational regulator that binds mRNA to regulate translation initiation and/or mRNA stability. Usually binds in the 5'-UTR at or near the Shine-Dalgarno sequence preventing ribosome-binding, thus repressing translation. Its main target seems to be the major flagellin gene, while its function is anatagonized by FliW. This Nocardioides sp. (strain ATCC BAA-499 / JS614) protein is Translational regulator CsrA.